A 359-amino-acid chain; its full sequence is Fructose-bisphosphate aldolase (359 aa).

Serine 50 lines the D-glyceraldehyde 3-phosphate pocket. Aspartate 83 functions as the Proton donor in the catalytic mechanism. Positions 84, 105, 142, and 198 each coordinate Zn(2+). Position 199 (glycine 199) interacts with dihydroxyacetone phosphate. Histidine 232 lines the Zn(2+) pocket. Dihydroxyacetone phosphate contacts are provided by residues 233 to 235 (GSS) and 275 to 278 (NIDT).

It belongs to the class II fructose-bisphosphate aldolase family. Zn(2+) serves as cofactor.

The enzyme catalyses beta-D-fructose 1,6-bisphosphate = D-glyceraldehyde 3-phosphate + dihydroxyacetone phosphate. The protein operates within carbohydrate degradation; glycolysis; D-glyceraldehyde 3-phosphate and glycerone phosphate from D-glucose: step 4/4. Functionally, catalyzes the aldol condensation of dihydroxyacetone phosphate (DHAP or glycerone-phosphate) with glyceraldehyde 3-phosphate (G3P) to form fructose 1,6-bisphosphate (FBP) in gluconeogenesis and the reverse reaction in glycolysis. In Nostoc commune, this protein is Fructose-bisphosphate aldolase (fba).